The sequence spans 268 residues: Phosphonates import ATP-binding protein PhnC (268 aa).

Positions 11–254 (LHAEAVTKRF…EVMAIYQRAE (244 aa)) constitute an ABC transporter domain. 43–50 (GLSGSGKS) serves as a coordination point for ATP.

It belongs to the ABC transporter superfamily. Phosphonates importer (TC 3.A.1.9.1) family. As to quaternary structure, the complex is composed of two ATP-binding proteins (PhnC), two transmembrane proteins (PhnE) and a solute-binding protein (PhnD).

Its subcellular location is the cell membrane. It catalyses the reaction phosphonate(out) + ATP + H2O = phosphonate(in) + ADP + phosphate + H(+). Functionally, part of the ABC transporter complex PhnCDE involved in phosphonates import. Responsible for energy coupling to the transport system. The protein is Phosphonates import ATP-binding protein PhnC of Nocardia farcinica (strain IFM 10152).